Consider the following 426-residue polypeptide: Serine--tRNA ligase (426 aa).

Residue 233–235 (TAE) participates in L-serine binding. 264–266 (RSE) lines the ATP pocket. Glu287 serves as a coordination point for L-serine. 351 to 354 (EISS) contacts ATP. Residue Ser385 participates in L-serine binding.

Belongs to the class-II aminoacyl-tRNA synthetase family. Type-1 seryl-tRNA synthetase subfamily. As to quaternary structure, homodimer. The tRNA molecule binds across the dimer.

The protein resides in the cytoplasm. The catalysed reaction is tRNA(Ser) + L-serine + ATP = L-seryl-tRNA(Ser) + AMP + diphosphate + H(+). The enzyme catalyses tRNA(Sec) + L-serine + ATP = L-seryl-tRNA(Sec) + AMP + diphosphate + H(+). Its pathway is aminoacyl-tRNA biosynthesis; selenocysteinyl-tRNA(Sec) biosynthesis; L-seryl-tRNA(Sec) from L-serine and tRNA(Sec): step 1/1. Catalyzes the attachment of serine to tRNA(Ser). Is also able to aminoacylate tRNA(Sec) with serine, to form the misacylated tRNA L-seryl-tRNA(Sec), which will be further converted into selenocysteinyl-tRNA(Sec). The polypeptide is Serine--tRNA ligase (Brachyspira hyodysenteriae (strain ATCC 49526 / WA1)).